The following is a 764-amino-acid chain: FAST kinase domain-containing protein 5, mitochondrial (764 aa).

A mitochondrion-targeting transit peptide spans 1 to 27 (MAATLKSLKLVRYRAFCSPSAFGAVRS). Ser-95 bears the Phosphoserine mark. Lys-507 carries the post-translational modification N6-acetyllysine. Residues 697 to 757 (LAVQFTNRNQ…RLEKLAFLHE (61 aa)) enclose the RAP domain.

It belongs to the FAST kinase family. Found in a complex with GRSF1, DDX28, DHX30 and FASTKD2. Associates with the 12S mitochondrial rRNA (12S mt-rRNA). As to expression, expression detected in spleen, thymus, testis, ovary, colon, heart, smooth muscle, kidney, brain, lung, liver and white adipose tissue with highest expression in heart, smooth muscle, liver and thyroid.

It localises to the mitochondrion matrix. The protein localises to the mitochondrion nucleoid. Plays an important role in the processing of non-canonical mitochondrial mRNA precursors. The protein is FAST kinase domain-containing protein 5, mitochondrial (FASTKD5) of Homo sapiens (Human).